The sequence spans 200 residues: Holliday junction branch migration complex subunit RuvA (200 aa).

Residues 1–64 (MLSYLSGTLI…EDALQLYGFI (64 aa)) are domain I. The segment at 65 to 143 (TTEDREVFKL…KLDLKIDIKE (79 aa)) is domain II. The flexible linker stretch occupies residues 144 to 148 (TAFRS). The tract at residues 149–200 (DKQQVRNDAYSALISLGFTKSIAEKAMRAAIAEVPDGSVDDLIRVALRHVQS) is domain III.

This sequence belongs to the RuvA family. In terms of assembly, homotetramer. Forms an RuvA(8)-RuvB(12)-Holliday junction (HJ) complex. HJ DNA is sandwiched between 2 RuvA tetramers; dsDNA enters through RuvA and exits via RuvB. An RuvB hexamer assembles on each DNA strand where it exits the tetramer. Each RuvB hexamer is contacted by two RuvA subunits (via domain III) on 2 adjacent RuvB subunits; this complex drives branch migration. In the full resolvosome a probable DNA-RuvA(4)-RuvB(12)-RuvC(2) complex forms which resolves the HJ.

It is found in the cytoplasm. Its function is as follows. The RuvA-RuvB-RuvC complex processes Holliday junction (HJ) DNA during genetic recombination and DNA repair, while the RuvA-RuvB complex plays an important role in the rescue of blocked DNA replication forks via replication fork reversal (RFR). RuvA specifically binds to HJ cruciform DNA, conferring on it an open structure. The RuvB hexamer acts as an ATP-dependent pump, pulling dsDNA into and through the RuvAB complex. HJ branch migration allows RuvC to scan DNA until it finds its consensus sequence, where it cleaves and resolves the cruciform DNA. This chain is Holliday junction branch migration complex subunit RuvA, found in Chloroherpeton thalassium (strain ATCC 35110 / GB-78).